The chain runs to 228 residues: Small ribosomal subunit protein uS2 (228 aa).

This sequence belongs to the universal ribosomal protein uS2 family.

The polypeptide is Small ribosomal subunit protein uS2 (Buchnera aphidicola subsp. Baizongia pistaciae (strain Bp)).